The primary structure comprises 363 residues: Somatostatin receptor type 5 (363 aa).

The Extracellular segment spans residues M1 to A35. Residues N13 and N23 are each glycosylated (N-linked (GlcNAc...) asparagine). A helical transmembrane segment spans residues R36–L63. Topologically, residues R64 to N73 are cytoplasmic. A helical transmembrane segment spans residues V74–V99. Topologically, residues V100–R111 are extracellular. C110 and C185 form a disulfide bridge. A helical membrane pass occupies residues L112–V133. Residues D134–K155 are Cytoplasmic-facing. A helical membrane pass occupies residues M156–A176. At D177–W196 the chain is on the extracellular side. N-linked (GlcNAc...) asparagine glycosylation occurs at N186. The chain crosses the membrane as a helical span at residues G197–L221. Topologically, residues L222 to T247 are cytoplasmic. The helical transmembrane segment at R248–A273 threads the bilayer. Residues F274–A283 lie on the Extracellular side of the membrane. The chain crosses the membrane as a helical span at residues G284–S308. Over D309 to I363 the chain is Cytoplasmic. C320 carries the S-palmitoyl cysteine; by ZDHHC5 lipid modification. Residues D331–I363 are disordered.

This sequence belongs to the G-protein coupled receptor 1 family. As to quaternary structure, heterodimer with SSTR2. Heterodimerization with SSTR2 increases cell growth inhibition activity of SSTR2. Post-translationally, palmitoylated at Cys-320 by ZDHHC5, but not ZDHHC8. Palmitoylation creates an additional intracellular loop which is thought to be important for efficient coupling to G-proteins and may target the protein to lipid rafts. As to expression, prominent in the pituitary and small intestine. Low levels in islets and spleen. Not detected in kidney, pancreas, cerebellum, or cortex.

The protein resides in the cell membrane. Functionally, receptor for somatostatin-28. The activity of this receptor is mediated by G proteins which inhibit adenylyl cyclase. Increases cell growth inhibition activity of SSTR2 following heterodimerization. The polypeptide is Somatostatin receptor type 5 (Sstr5) (Rattus norvegicus (Rat)).